We begin with the raw amino-acid sequence, 110 residues long: Eukaryotic translation initiation factor eIF1 (110 aa).

Thr-40 bears the Phosphothreonine mark.

It belongs to the SUI1 family.

Functionally, probably involved in translation. The chain is Eukaryotic translation initiation factor eIF1 from Drosophila melanogaster (Fruit fly).